Here is a 620-residue protein sequence, read N- to C-terminus: 1-deoxy-D-xylulose-5-phosphate synthase (620 aa).

Thiamine diphosphate is bound by residues histidine 80 and 121–123; that span reads GHS. Aspartate 152 serves as a coordination point for Mg(2+). Residues 153 to 154, asparagine 181, tyrosine 288, and glutamate 370 contribute to the thiamine diphosphate site; that span reads GA. Residue asparagine 181 coordinates Mg(2+).

Belongs to the transketolase family. DXPS subfamily. In terms of assembly, homodimer. Mg(2+) is required as a cofactor. It depends on thiamine diphosphate as a cofactor.

The catalysed reaction is D-glyceraldehyde 3-phosphate + pyruvate + H(+) = 1-deoxy-D-xylulose 5-phosphate + CO2. It functions in the pathway metabolic intermediate biosynthesis; 1-deoxy-D-xylulose 5-phosphate biosynthesis; 1-deoxy-D-xylulose 5-phosphate from D-glyceraldehyde 3-phosphate and pyruvate: step 1/1. In terms of biological role, catalyzes the acyloin condensation reaction between C atoms 2 and 3 of pyruvate and glyceraldehyde 3-phosphate to yield 1-deoxy-D-xylulose-5-phosphate (DXP). The polypeptide is 1-deoxy-D-xylulose-5-phosphate synthase (Shigella dysenteriae serotype 1 (strain Sd197)).